The following is a 500-amino-acid chain: Probable cytosol aminopeptidase (500 aa).

Residues lysine 265 and aspartate 270 each coordinate Mn(2+). Lysine 277 is a catalytic residue. Residues aspartate 288, aspartate 347, and glutamate 349 each coordinate Mn(2+). Arginine 351 is an active-site residue.

It belongs to the peptidase M17 family. The cofactor is Mn(2+).

It is found in the cytoplasm. The enzyme catalyses Release of an N-terminal amino acid, Xaa-|-Yaa-, in which Xaa is preferably Leu, but may be other amino acids including Pro although not Arg or Lys, and Yaa may be Pro. Amino acid amides and methyl esters are also readily hydrolyzed, but rates on arylamides are exceedingly low.. It carries out the reaction Release of an N-terminal amino acid, preferentially leucine, but not glutamic or aspartic acids.. Presumably involved in the processing and regular turnover of intracellular proteins. Catalyzes the removal of unsubstituted N-terminal amino acids from various peptides. This Rickettsia africae (strain ESF-5) protein is Probable cytosol aminopeptidase.